Consider the following 350-residue polypeptide: Mannonate dehydratase (350 aa).

The protein belongs to the mannonate dehydratase family. Fe(2+) is required as a cofactor. Mn(2+) serves as cofactor.

It carries out the reaction D-mannonate = 2-dehydro-3-deoxy-D-gluconate + H2O. The protein operates within carbohydrate metabolism; pentose and glucuronate interconversion. Functionally, catalyzes the dehydration of D-mannonate. The protein is Mannonate dehydratase of Clostridium perfringens (strain 13 / Type A).